Consider the following 118-residue polypeptide: Large ribosomal subunit protein bL20 (118 aa).

Belongs to the bacterial ribosomal protein bL20 family.

In terms of biological role, binds directly to 23S ribosomal RNA and is necessary for the in vitro assembly process of the 50S ribosomal subunit. It is not involved in the protein synthesizing functions of that subunit. This is Large ribosomal subunit protein bL20 from Francisella tularensis subsp. tularensis (strain WY96-3418).